A 497-amino-acid polypeptide reads, in one-letter code: Probable malate:quinone oxidoreductase (497 aa).

Belongs to the MQO family. FAD is required as a cofactor.

It catalyses the reaction (S)-malate + a quinone = a quinol + oxaloacetate. Its pathway is carbohydrate metabolism; tricarboxylic acid cycle; oxaloacetate from (S)-malate (quinone route): step 1/1. The sequence is that of Probable malate:quinone oxidoreductase from Rhodopseudomonas palustris (strain TIE-1).